Reading from the N-terminus, the 201-residue chain is Probable nicotinate-nucleotide adenylyltransferase (201 aa).

This sequence belongs to the NadD family.

The enzyme catalyses nicotinate beta-D-ribonucleotide + ATP + H(+) = deamido-NAD(+) + diphosphate. It participates in cofactor biosynthesis; NAD(+) biosynthesis; deamido-NAD(+) from nicotinate D-ribonucleotide: step 1/1. Catalyzes the reversible adenylation of nicotinate mononucleotide (NaMN) to nicotinic acid adenine dinucleotide (NaAD). This chain is Probable nicotinate-nucleotide adenylyltransferase, found in Clostridium botulinum (strain Langeland / NCTC 10281 / Type F).